The sequence spans 1537 residues: MSVPSAPHQRAESKNRVPRPGQKNRKLPKLRLHWPGATYGGALLLLLISYGLELGSVHCYEKMYSQTEKQRYDGWYNNLAHPDWGSVDSHLVRKAPPSYSDGVYAMAGANRPSTRRLSRLFMRGKDGLGSKFNRTALLAFFGQLVANEIVMASESGCPIEMHRIEIEKCDEMYDRECRGDKYIPFHRAAYDRDTGQSPNAPREQINQMTAWIDGSFIYSTSEAWLNAMRSFHNGTLLTEKDGKLPVRNTMRVPLFNNPVPSVMKMLSPERLFLLGDPRTNQNPAILSFAILFLRWHNTLAQRIKRVHPDWSDEDIYQRARHTVIASLQNVIVYEYLPAFLGTSLPPYEGYKQDIHPGIGHIFQAAAFRFGHTMIPPGIYRRDGQCNFKETPMGYPAVRLCSTWWDSSGFFADTSVEEVLMGLASQISEREDPVLCSDVRDKLFGPMEFTRRDLGALNIMRGRDNGLPDYNTARESYGLKRHKTWTDINPPLFETQPELLDMLKEAYDNKLDDVDVYVGGMLESYGQPGEFFTAVIKEQFQRLRDADRFWFENERNGIFTPEEIAELRKITLWDIIVNSTDVKEEEIQKDVFMWRTGDPCPQPMQLNATELEPCTYLEGYDYFSGSELMFIYVCVFLGFVPILCAGAGYCVVKLQNSKRRRLKIRQEALRAPQHKGSVDKMLAREWLHANHKRLVTVKFGPEAAIYTVDRKGEKLRTFSLKHIDVVSVEESATNHIKKKPYILLRVPSDHDLVLELESYGARRKFVKKLEDFLLLHKKEMTLMEVNRDIMLARAETRERRQKRLEYFFREAYALTFGLRPGERRRRSDASSDGEVMTVMRTSLSKAEFAAALGMKPNDMFVRKMFNIVDKDQDGRISFQEFLETVVLFSRGKTDDKLRIIFDMCDNDRNGVIDKGELSEMMRSLVEIARTTSLGDDQVTELIDGMFQDVGLEHKNHLTYQDFKLMMKEYKGDFVAIGLDCKGAKQNFLDTSTNVARMTSFNIEPMQDKPRHWLLAKWDAYITFLEENRQNIFYLFLFYVVTIVLFVERFIHYSFMAEHTDLRHIMGVGIAITRGSAASLSFCYSLLLLTMSRNLITKLKEFPIQQYIPLDSHIQFHKIAACTALFFSVLHTVGHIVNFYHVSTQSHENLRCLTREVHFASDYKPDITFWLFQTVTGTTGVMLFIIMCIIFVFAHPTIRKKAYNFFWNMHTLYIGLYLLSLIHGLARLTGPPRFWMFFLGPGIVYTLDKIVSLRTKYMALDVIDTDLLPSDVIKIKFYRPPNLKYLSGQWVRLSCTAFRPHEMHSFTLTSAPHENFLSCHIKAQGPWTWKLRNYFDPCNYNPEDQPKIRIEGPFGGGNQDWYKFEVAVMVGGGIGVTPYASILNDLVFGTSTNRYSGVACKKVYFLWICPSHKHFEWFIDVLRDVEKKDVTNVLEIHIFITQFFHKFDLRTTMLYICENHFQRLSKTSIFTGLKAVNHFGRPDMSSFLKFVQKKHSYVSKIGVFSCGPRPLTKSVMSACDEVNKTRKLPYFIHHFENFG.

A disordered region spans residues 1–29 (MSVPSAPHQRAESKNRVPRPGQKNRKLPK). The Extracellular segment spans residues 1–626 (MSVPSAPHQR…EGYDYFSGSE (626 aa)). The interval 63 to 628 (MYSQTEKQRY…YDYFSGSELM (566 aa)) is peroxidase-like; mediates peroxidase activity. 4 N-linked (GlcNAc...) asparagine glycosylation sites follow: Asn-133, Asn-233, Asn-577, and Asn-606. The helical transmembrane segment at 627-647 (LMFIYVCVFLGFVPILCAGAG) threads the bilayer. Topologically, residues 648–1029 (YCVVKLQNSK…ITFLEENRQN (382 aa)) are cytoplasmic. The residue at position 826 (Ser-826) is a Phosphoserine. EF-hand domains lie at 855–890 (PNDM…FSRG), 891–926 (KTDD…LVEI), and 936–971 (QVTE…YKGD). Residues Asp-868, Asp-870, Asp-872, Arg-874, Glu-879, Asp-904, Asp-906, Asn-908, and Glu-915 each contribute to the Ca(2+) site. A helical transmembrane segment spans residues 1030-1050 (IFYLFLFYVVTIVLFVERFIH). Over 1051 to 1065 (YSFMAEHTDLRHIMG) the chain is Extracellular. Residues 1066–1086 (VGIAITRGSAASLSFCYSLLL) form a helical membrane-spanning segment. The Ferric oxidoreductase domain maps to 1078–1218 (LSFCYSLLLL…TLYIGLYLLS (141 aa)). Topologically, residues 1087–1116 (LTMSRNLITKLKEFPIQQYIPLDSHIQFHK) are cytoplasmic. Tyr-1105 is subject to Phosphotyrosine. The chain crosses the membrane as a helical span at residues 1117 to 1137 (IAACTALFFSVLHTVGHIVNF). Topologically, residues 1138-1171 (YHVSTQSHENLRCLTREVHFASDYKPDITFWLFQ) are extracellular. The helical transmembrane segment at 1172–1192 (TVTGTTGVMLFIIMCIIFVFA) threads the bilayer. Residues 1193–1202 (HPTIRKKAYN) lie on the Cytoplasmic side of the membrane. A helical membrane pass occupies residues 1203-1223 (FFWNMHTLYIGLYLLSLIHGL). The Extracellular portion of the chain corresponds to 1224–1230 (ARLTGPP). A helical membrane pass occupies residues 1231–1251 (RFWMFFLGPGIVYTLDKIVSL). At 1252-1537 (RTKYMALDVI…YFIHHFENFG (286 aa)) the chain is on the cytoplasmic side. One can recognise an FAD-binding FR-type domain in the interval 1253–1358 (TKYMALDVID…EGPFGGGNQD (106 aa)).

It in the N-terminal section; belongs to the peroxidase family.

It is found in the membrane. It carries out the reaction NADH + O2 + H(+) = H2O2 + NAD(+). It catalyses the reaction NADPH + O2 + H(+) = H2O2 + NADP(+). Peroxidase activity is inhibited by aminotriazole and azide. Plays a role in innate immunity limiting microbial proliferation in the gut. Acts downstream of a hh-signaling pathway to induce the production of reactive oxygen species (ROS) in response to intestinal bacterial infection. May generate antimicrobial oxidative burst through its peroxidase-like domain. In Drosophila melanogaster (Fruit fly), this protein is Dual oxidase (Duox).